Here is a 24-residue protein sequence, read N- to C-terminus: Coenzyme PQQ synthesis protein A (24 aa).

Positions 16–20 form a cross-link, pyrroloquinoline quinone (Glu-Tyr); sequence EVTMY.

This sequence belongs to the PqqA family.

It participates in cofactor biosynthesis; pyrroloquinoline quinone biosynthesis. In terms of biological role, required for coenzyme pyrroloquinoline quinone (PQQ) biosynthesis. PQQ is probably formed by cross-linking a specific glutamate to a specific tyrosine residue and excising these residues from the peptide. In Acinetobacter baumannii (strain SDF), this protein is Coenzyme PQQ synthesis protein A.